A 953-amino-acid chain; its full sequence is ABC transporter A family member 11 (953 aa).

A run of 6 helical transmembrane segments spans residues 33-53 (CLQI…EEAM), 230-250 (GPVF…GALV), 277-297 (TWEG…GMIF), 307-327 (FVLV…LAFA), 341-361 (VGFL…TGFP), and 417-437 (VISI…WFVL). Residues 519–764 (VQIHGLAKTY…FGTGFVATVS (246 aa)) enclose the ABC transporter domain. Position 565–572 (565–572 (GPNGAGKT)) interacts with ATP.

Belongs to the ABC transporter superfamily. ABCA family. CPR flippase (TC 3.A.1.211) subfamily.

Its subcellular location is the membrane. This Arabidopsis thaliana (Mouse-ear cress) protein is ABC transporter A family member 11 (ABCA11).